The chain runs to 426 residues: MASSNLIKQLQERGLVAQVTDEEALAERLAQGPIALYCGFDPTADSLHLGHLVPLLCLKRFQQAGHKPVALVGGATGLIGDPSFKAAERKLNTEDTVQEWVDKIRKQVAPFLDFDCGDNSAIAANNYDWFGSMNVLTFLRDIGKHFSVNQMINKEAVKQRLNRDDQGISFTEFSYNLLQGYDFACLNKLHGVALQIGGSDQWGNITSGIDLTRRLHQNQVFGLTVPLITKADGTKFGKTEGGAVWLDPKKTSPYKFYQFWINTADADVYRFLKFFTFMDMAEINALEEEDKNSGKAPRAQYVLAEQVTRLVHGEEGLEAAKRITESLFNGNLSDLSESDFEQLAQDGMPMVELEKGTDLMQALVESELQPSRGQARKAIAANGVTVNGIKQPDPDYVLNENDRYFSNYTLLRRGKKNWCLIKWKSK.

Tyrosine 37 contributes to the L-tyrosine binding site. The short motif at 42–51 is the 'HIGH' region element; the sequence is PTADSLHLGH. Tyrosine 175 and glutamine 179 together coordinate L-tyrosine. The 'KMSKS' region motif lies at 235-239; it reads KFGKT. Residue lysine 238 participates in ATP binding. One can recognise an S4 RNA-binding domain in the interval 357-415; sequence TDLMQALVESELQPSRGQARKAIAANGVTVNGIKQPDPDYVLNENDRYFSNYTLLRRGK.

This sequence belongs to the class-I aminoacyl-tRNA synthetase family. TyrS type 1 subfamily. In terms of assembly, homodimer.

The protein resides in the cytoplasm. The catalysed reaction is tRNA(Tyr) + L-tyrosine + ATP = L-tyrosyl-tRNA(Tyr) + AMP + diphosphate + H(+). Functionally, catalyzes the attachment of tyrosine to tRNA(Tyr) in a two-step reaction: tyrosine is first activated by ATP to form Tyr-AMP and then transferred to the acceptor end of tRNA(Tyr). The protein is Tyrosine--tRNA ligase of Klebsiella pneumoniae (strain 342).